The chain runs to 522 residues: Solute carrier family 2, facilitated glucose transporter member 2 (522 aa).

The Cytoplasmic portion of the chain corresponds to 1-10 (MSEDKITGTL). The chain crosses the membrane as a helical span at residues 11–31 (AFTVFTAVLGSFQFGYDIGVI). The Extracellular segment spans residues 32 to 96 (NAPQEVIISH…SAHIVTMLWS (65 aa)). An N-linked (GlcNAc...) asparagine glycan is attached at Asn62. The helical transmembrane segment at 97-117 (LSVSSFAVGGMVASFFGGWLG) threads the bilayer. The Cytoplasmic portion of the chain corresponds to 118-125 (DKLGRIKA). The helical transmembrane segment at 126-146 (MLAANSLSLTGALLMGCSKFG) threads the bilayer. Over 147–156 (PAHALIIAGR) the chain is Extracellular. Residues 157–177 (SVSGLYCGLISGLVPMYIGEI) traverse the membrane as a helical segment. Topologically, residues 178–185 (APTTLRGA) are cytoplasmic. Residues 186 to 206 (LGTLHQLALVTGILISQIAGL) form a helical membrane-spanning segment. Gln191 is a binding site for D-glucose. Topologically, residues 207–215 (SFILGNQDY) are extracellular. The helical transmembrane segment at 216-236 (WHILLGLSAVPALLQCLLLLF) threads the bilayer. Over 237-301 (CPESPRYLYL…LFTDPNYRQP (65 aa)) the chain is Cytoplasmic. A helical transmembrane segment spans residues 302–322 (IVVALMLHLAQQFSGINGIFY). D-glucose-binding positions include 312–313 (QQ) and Asn318. Topologically, residues 323–337 (YSTSIFQTAGISQPV) are extracellular. Residues 338 to 358 (YATIGVGAINMIFTAVSVLLV) form a helical membrane-spanning segment. Asn347 lines the D-glucose pocket. The Cytoplasmic portion of the chain corresponds to 359-365 (EKAGRRT). A helical transmembrane segment spans residues 366 to 386 (LFLAGMIGMFFCAVFMSLGLV). Topologically, residues 387-401 (LLDKFTWMSYVSMTA) are extracellular. The chain crosses the membrane as a helical span at residues 402–422 (IFLFVSFFEIGPGPIPWFMVA). Residues Glu410 and Trp418 each contribute to the D-glucose site. At 423-431 (EFFSQGPRP) the chain is on the cytoplasmic side. Residues 432–452 (TALALAAFSNWVCNFIIALCF) form a helical membrane-spanning segment. Topologically, residues 453–459 (QYIADFL) are extracellular. The chain crosses the membrane as a helical span at residues 460-480 (GPYVFFLFAGVVLVFTLFTFF). Residues 481–522 (KVPETKGKSFDEIAAEFRKKSGSAPPRKATVQMEFLGSSETV) lie on the Cytoplasmic side of the membrane. Thr521 carries the phosphothreonine modification.

The protein belongs to the major facilitator superfamily. Sugar transporter (TC 2.A.1.1) family. Glucose transporter subfamily. In terms of processing, N-glycosylated; required for stability and retention at the cell surface of pancreatic beta cells. In terms of tissue distribution, present in liver, intestine, kidney and beta-pancreatic islet cells.

It is found in the cell membrane. The enzyme catalyses D-glucose(out) = D-glucose(in). The catalysed reaction is D-fructose(out) = D-fructose(in). It carries out the reaction L-dehydroascorbate(out) = L-dehydroascorbate(in). It catalyses the reaction D-galactose(in) = D-galactose(out). D-glucose and maltose competitively inhibit fructose transport. D-glucose, D-fructose and maltose inhibit deoxyglucose transport. In terms of biological role, facilitative hexose transporter that mediates the transport of glucose, fructose and galactose. Likely mediates the bidirectional transfer of glucose across the plasma membrane of hepatocytes and is responsible for uptake of glucose by the beta cells; may comprise part of the glucose-sensing mechanism of the beta cell. May also participate with the Na(+)/glucose cotransporter in the transcellular transport of glucose in the small intestine and kidney. Also able to mediate the transport of dehydroascorbate. This is Solute carrier family 2, facilitated glucose transporter member 2 from Rattus norvegicus (Rat).